Here is a 163-residue protein sequence, read N- to C-terminus: Putative pre-16S rRNA nuclease (163 aa).

Belongs to the YqgF nuclease family.

It is found in the cytoplasm. Could be a nuclease involved in processing of the 5'-end of pre-16S rRNA. The sequence is that of Putative pre-16S rRNA nuclease from Zymomonas mobilis subsp. mobilis (strain ATCC 31821 / ZM4 / CP4).